A 216-amino-acid polypeptide reads, in one-letter code: Homeobox-leucine zipper protein ATHB-40 (216 aa).

Residues 28-52 (GEVKQPKRRRKKTKGSVASADGGNG) are disordered. Residues 52–111 (GLFRKRKLTDEQVNMLEMSFGDEHKLESERKDRLAAELGLDPRQVAVWFQNRRARWKNKR) constitute a DNA-binding region (homeobox). The tract at residues 112 to 140 (LEEEYNKLKNSHDNVVVDKCRLESEVIQL) is leucine-zipper.

The protein belongs to the HD-ZIP homeobox family. Class I subfamily. Expressed in roots, flowers and siliques.

The protein localises to the nucleus. Probable transcription factor. The polypeptide is Homeobox-leucine zipper protein ATHB-40 (ATHB-40) (Arabidopsis thaliana (Mouse-ear cress)).